Here is a 462-residue protein sequence, read N- to C-terminus: Alkaline phosphatase 3 (462 aa).

A signal peptide spans 1–32; that stretch reads MKKFPKKLLPIAVLSSIAFSSLASGSVPEASA. Mg(2+) is bound at residue Asp52. Asp52 contacts Zn(2+). Ser101 acts as the Phosphoserine intermediate in catalysis. Thr154 and Glu275 together coordinate Mg(2+). Residues Asp280, His284, Asp322, His323, and His419 each contribute to the Zn(2+) site.

It belongs to the alkaline phosphatase family. Monomer. Mg(2+) is required as a cofactor. Zn(2+) serves as cofactor.

It catalyses the reaction a phosphate monoester + H2O = an alcohol + phosphate. This chain is Alkaline phosphatase 3 (phoB), found in Bacillus subtilis (strain 168).